Consider the following 164-residue polypeptide: Phosphopantetheine adenylyltransferase (164 aa).

Thr9 is a binding site for substrate. ATP contacts are provided by residues 9-10 and His17; that span reads TF. Substrate-binding residues include Lys41, Leu78, and Arg92. ATP contacts are provided by residues 93–95, Glu103, and 128–134; these read GLR and RQAIASK.

The protein belongs to the bacterial CoaD family. In terms of assembly, homohexamer. The cofactor is Mg(2+).

The protein localises to the cytoplasm. The enzyme catalyses (R)-4'-phosphopantetheine + ATP + H(+) = 3'-dephospho-CoA + diphosphate. It participates in cofactor biosynthesis; coenzyme A biosynthesis; CoA from (R)-pantothenate: step 4/5. In terms of biological role, reversibly transfers an adenylyl group from ATP to 4'-phosphopantetheine, yielding dephospho-CoA (dPCoA) and pyrophosphate. This chain is Phosphopantetheine adenylyltransferase, found in Paracoccus denitrificans (strain Pd 1222).